The sequence spans 369 residues: Ubiquinone biosynthesis O-methyltransferase, mitochondrial (369 aa).

A mitochondrion-targeting transit peptide spans 1–85 (MWSGRKLGSS…SFRYPWARLY (85 aa)). Arginine 124 is an S-adenosyl-L-methionine binding site. Lysine 143 and lysine 149 each carry N6-acetyllysine. Residues glycine 154 and aspartate 175 each coordinate S-adenosyl-L-methionine. Lysine 196 is modified (N6-acetyllysine). Serine 222 contributes to the S-adenosyl-L-methionine binding site. Residues glutamate 223, glutamate 226, and histidine 227 each contribute to the Mg(2+) site.

The protein belongs to the class I-like SAM-binding methyltransferase superfamily. UbiG/COQ3 family. In terms of assembly, component of a multi-subunit COQ enzyme complex, composed of at least COQ3, COQ4, COQ5, COQ6, COQ7 and COQ9. Mg(2+) is required as a cofactor.

The protein resides in the mitochondrion inner membrane. The catalysed reaction is 3,4-dihydroxy-5-(all-trans-decaprenyl)benzoate + S-adenosyl-L-methionine = 4-hydroxy-3-methoxy-5-(all-trans-decaprenyl)benzoate + S-adenosyl-L-homocysteine + H(+). It catalyses the reaction a 3-demethylubiquinone + S-adenosyl-L-methionine = a ubiquinone + S-adenosyl-L-homocysteine. It carries out the reaction 3-demethylubiquinol-10 + S-adenosyl-L-methionine = ubiquinol-10 + S-adenosyl-L-homocysteine + H(+). It participates in cofactor biosynthesis; ubiquinone biosynthesis. Its function is as follows. O-methyltransferase required for two non-consecutive steps during ubiquinone biosynthesis. Catalyzes the 2 O-methylation of 3,4-dihydroxy-5-(all-trans-decaprenyl)benzoic acid into 4-hydroxy-3-methoxy-5-(all-trans-decaprenyl)benzoic acid. Also catalyzes the last step of ubiquinone biosynthesis by mediating methylation of 3-demethylubiquinone into ubiquinone. Also able to mediate the methylation of 3-demethylubiquinol-10 into ubiquinol-10. The sequence is that of Ubiquinone biosynthesis O-methyltransferase, mitochondrial from Homo sapiens (Human).